The sequence spans 508 residues: Light-independent protochlorophyllide reductase subunit B (508 aa).

Aspartate 36 contacts [4Fe-4S] cluster. Catalysis depends on aspartate 294, which acts as the Proton donor. 429–430 (GM) lines the substrate pocket.

Belongs to the ChlB/BchB/BchZ family. In terms of assembly, protochlorophyllide reductase is composed of three subunits; ChlL, ChlN and ChlB. Forms a heterotetramer of two ChlB and two ChlN subunits. The cofactor is [4Fe-4S] cluster.

The catalysed reaction is chlorophyllide a + oxidized 2[4Fe-4S]-[ferredoxin] + 2 ADP + 2 phosphate = protochlorophyllide a + reduced 2[4Fe-4S]-[ferredoxin] + 2 ATP + 2 H2O. It functions in the pathway porphyrin-containing compound metabolism; chlorophyll biosynthesis (light-independent). Its function is as follows. Component of the dark-operative protochlorophyllide reductase (DPOR) that uses Mg-ATP and reduced ferredoxin to reduce ring D of protochlorophyllide (Pchlide) to form chlorophyllide a (Chlide). This reaction is light-independent. The NB-protein (ChlN-ChlB) is the catalytic component of the complex. The chain is Light-independent protochlorophyllide reductase subunit B from Rippkaea orientalis (strain PCC 8801 / RF-1) (Cyanothece sp. (strain PCC 8801)).